The following is a 72-amino-acid chain: Translation initiation factor IF-1 (72 aa).

The S1-like domain occupies 1–72 (MAKEDNIEMQ…SKGRIVFRSR (72 aa)).

Belongs to the IF-1 family. As to quaternary structure, component of the 30S ribosomal translation pre-initiation complex which assembles on the 30S ribosome in the order IF-2 and IF-3, IF-1 and N-formylmethionyl-tRNA(fMet); mRNA recruitment can occur at any time during PIC assembly.

Its subcellular location is the cytoplasm. One of the essential components for the initiation of protein synthesis. Stabilizes the binding of IF-2 and IF-3 on the 30S subunit to which N-formylmethionyl-tRNA(fMet) subsequently binds. Helps modulate mRNA selection, yielding the 30S pre-initiation complex (PIC). Upon addition of the 50S ribosomal subunit IF-1, IF-2 and IF-3 are released leaving the mature 70S translation initiation complex. The chain is Translation initiation factor IF-1 from Salmonella paratyphi A (strain ATCC 9150 / SARB42).